Consider the following 601-residue polypeptide: Cdc42-interacting protein 4 (601 aa).

Positions 1 to 117 (MDWGTELWDQ…EMKQERKMHF (117 aa)) are required for podosome formation and interaction with AKAP9 and microtubules. Residues 1–117 (MDWGTELWDQ…EMKQERKMHF (117 aa)) form a required for translocation to the plasma membrane in response to insulin region. Residues 1-264 (MDWGTELWDQ…AANAVDPKND (264 aa)) form the F-BAR domain. Residues 67-259 (FSQQQSFVQI…EGMKVAANAV (193 aa)) are a coiled coil. Disordered stretches follow at residues 280-358 (GDVE…GRDP), 390-420 (DFSHLPPEQQRKRLQQQLEERSRELQKEVDQ), and 479-543 (RGDS…SPIG). Over residues 289 to 302 (QPMNRAPSDSSLGT) the composition is skewed to polar residues. The interval 293–537 (RAPSDSSLGT…TEFDEDFEEE (245 aa)) is interaction with CDC42. Residues 293-601 (RAPSDSSLGT…PTSYLRVTLN (309 aa)) are interaction with PDE6G. 3 positions are modified to phosphoserine: serine 296, serine 298, and serine 299. Positions 314–329 (GRSRTKRWPFGKKNKP) are enriched in basic residues. Position 335 is a phosphoserine (serine 335). Positions 336–346 (PLGGPVPSALP) are enriched in low complexity. Serine 351 carries the post-translational modification Phosphoserine. The stretch at 388 to 481 (TEDFSHLPPE…ESRVLSNRGD (94 aa)) forms a coiled coil. Positions 393-470 (HLPPEQQRKR…VQKYEAWLAE (78 aa)) constitute an REM-1 domain. Basic and acidic residues predominate over residues 407–420 (LEERSRELQKEVDQ). Residues 471-601 (AESRVLSNRG…PTSYLRVTLN (131 aa)) are required for interaction with FASLG and localization to lysosomes. At serine 482 the chain carries Phosphoserine. Residues 487–541 (ARPPDPPASAPPDSSSNSASQDTKESSEEPPSEESQDTPIYTEFDEDFEEEPTSP) form an interaction with DNM2 and WASL region. Residues 497-506 (PPDSSSNSAS) show a composition bias toward low complexity. Residues 529-538 (EFDEDFEEEP) are compositionally biased toward acidic residues. An interaction with DNM1 and WASL region spans residues 529–601 (EFDEDFEEEP…PTSYLRVTLN (73 aa)). The tract at residues 538-601 (PTSPIGHCVA…PTSYLRVTLN (64 aa)) is required for podosome formation. Positions 540-601 (SPIGHCVAIY…PTSYLRVTLN (62 aa)) constitute an SH3 domain. An interaction with WAS region spans residues 544–601 (HCVAIYHFEGSSEGTISMAEGEDLSLMEEDKGDGWTRVRRKEGGEGYVPTSYLRVTLN). The segment at 546–601 (VAIYHFEGSSEGTISMAEGEDLSLMEEDKGDGWTRVRRKEGGEGYVPTSYLRVTLN) is interaction with ARHGAP17, DAAM1, DIAPH1 and DIAPH2.

Belongs to the FNBP1 family. Interacts specifically with GTP-bound RHOQ. Interacts with DNM2 and PDE6G. Homodimerizes, the dimers can polymerize end-to-end to form filamentous structures. Interacts specifically with GTP-bound CDC42. Interacts with AKAP9, ARHGAP17, DAAM1, DIAPH1, DIAPH2, DNM1, FASLG/FASL, GAPVD1, LYN, microtubules, SRC, WAS/WASP and WASL/N-WASP. Interacts with the ligand binding domain of the thyroid receptor (TR) in the presence of thyroid hormone. May interact with CTNNB1 and HD/HTT. In terms of processing, tyrosine phosphorylated. Also phosphorylated by PKA. Expressed in brain, colon, heart, kidney, liver, lung, megakaryocyte, ovary, pancreas, peripheral blood lymphocytes, placenta, prostate, skeletal muscle, small intestine, spleen, testis, thymus and trachea.

It localises to the cytoplasm. The protein localises to the cytoskeleton. It is found in the cell cortex. Its subcellular location is the lysosome. The protein resides in the golgi apparatus. It localises to the cell membrane. The protein localises to the cell projection. It is found in the phagocytic cup. Its subcellular location is the perinuclear region. Functionally, required for translocation of GLUT4 to the plasma membrane in response to insulin signaling. Required to coordinate membrane tubulation with reorganization of the actin cytoskeleton during endocytosis. Binds to lipids such as phosphatidylinositol 4,5-bisphosphate and phosphatidylserine and promotes membrane invagination and the formation of tubules. Also promotes CDC42-induced actin polymerization by recruiting WASL/N-WASP which in turn activates the Arp2/3 complex. Actin polymerization may promote the fission of membrane tubules to form endocytic vesicles. Required for the formation of podosomes, actin-rich adhesion structures specific to monocyte-derived cells. May be required for the lysosomal retention of FASLG/FASL. This is Cdc42-interacting protein 4 (TRIP10) from Homo sapiens (Human).